We begin with the raw amino-acid sequence, 255 residues long: 14-3-3 protein 5 (255 aa).

This sequence belongs to the 14-3-3 family. As to quaternary structure, homodimer.

This chain is 14-3-3 protein 5 (TFT5), found in Solanum lycopersicum (Tomato).